Consider the following 426-residue polypeptide: 3-phosphoshikimate 1-carboxyvinyltransferase (426 aa).

Residues Lys22, Ser23, and Arg27 each contribute to the 3-phosphoshikimate site. Lys22 is a phosphoenolpyruvate binding site. Residues Gly96 and Arg124 each contribute to the phosphoenolpyruvate site. 7 residues coordinate 3-phosphoshikimate: Ser170, Ser171, Gln172, Ser198, Asp314, Asn337, and Lys341. Gln172 provides a ligand contact to phosphoenolpyruvate. Asp314 functions as the Proton acceptor in the catalytic mechanism. Phosphoenolpyruvate-binding residues include Arg345, Arg387, and Lys412.

It belongs to the EPSP synthase family. In terms of assembly, monomer.

The protein resides in the cytoplasm. It catalyses the reaction 3-phosphoshikimate + phosphoenolpyruvate = 5-O-(1-carboxyvinyl)-3-phosphoshikimate + phosphate. It participates in metabolic intermediate biosynthesis; chorismate biosynthesis; chorismate from D-erythrose 4-phosphate and phosphoenolpyruvate: step 6/7. Functionally, catalyzes the transfer of the enolpyruvyl moiety of phosphoenolpyruvate (PEP) to the 5-hydroxyl of shikimate-3-phosphate (S3P) to produce enolpyruvyl shikimate-3-phosphate and inorganic phosphate. The chain is 3-phosphoshikimate 1-carboxyvinyltransferase from Shewanella baltica (strain OS195).